A 351-amino-acid polypeptide reads, in one-letter code: Histidine protein kinase SaeS (351 aa).

Transmembrane regions (helical) follow at residues 9–29 (IIIGVVSSILLTSTILAIAYI) and 40–60 (TLTLTTIITSCLTLLICSIFI). Residues 61–114 (NPLIQKIKQFNIKTKQFANGNYASNDKTFNSPKEIYELNQSFNKMASEITQQMN) form the HAMP domain. A Histidine kinase domain is found at 129–348 (NLAHDLKTPL…TMTVTLHKLD (220 aa)). Phosphohistidine; by autocatalysis is present on His-132.

Autophosphorylated.

The protein localises to the cell membrane. It catalyses the reaction ATP + protein L-histidine = ADP + protein N-phospho-L-histidine.. Functionally, member of the two-component regulatory system SaeR/SaeS involved in the regulation of staphylococcal virulence factors in a strain-dependent fashion. Probably functions as a membrane-associated protein kinase that upon sensing the appropriate signal, autophosphorylates and in turn activates the cytosolic response regulator SaeR. This chain is Histidine protein kinase SaeS (saeS), found in Staphylococcus aureus (strain MRSA252).